We begin with the raw amino-acid sequence, 627 residues long: Membrane protein insertase YidC (627 aa).

The next 6 helical transmembrane spans lie at 3–23, 376–396, 450–470, 502–522, 534–554, and 558–578; these read KNTVIGLVLIGLVIFGFSWLN, WGLIILLLTLGIKLLISPLAY, LPMLLQFPFLIAMYMYFPTTI, FYGNHVSLFCLLMSISNILYI, EGMAMLKWMPYITTVMFLFFF, and ASGLCYYYFLSSIITVIQYMS.

This sequence belongs to the OXA1/ALB3/YidC family. Type 1 subfamily. Interacts with the Sec translocase complex via SecD. Specifically interacts with transmembrane segments of nascent integral membrane proteins during membrane integration.

It is found in the cell inner membrane. Required for the insertion and/or proper folding and/or complex formation of integral membrane proteins into the membrane. Involved in integration of membrane proteins that insert both dependently and independently of the Sec translocase complex, as well as at least some lipoproteins. Aids folding of multispanning membrane proteins. The chain is Membrane protein insertase YidC from Porphyromonas gingivalis (strain ATCC BAA-308 / W83).